A 390-amino-acid chain; its full sequence is Magnesium-protoporphyrin IX monomethyl ester [oxidative] cyclase (390 aa).

It belongs to the AcsF family. Fe cation serves as cofactor.

The catalysed reaction is Mg-protoporphyrin IX 13-monomethyl ester + 3 NADPH + 3 O2 + 2 H(+) = 3,8-divinyl protochlorophyllide a + 3 NADP(+) + 5 H2O. The protein operates within porphyrin-containing compound metabolism; chlorophyll biosynthesis (light-independent). Its function is as follows. Catalyzes the formation of the isocyclic ring in chlorophyll biosynthesis. Mediates the cyclase reaction, which results in the formation of divinylprotochlorophyllide (Pchlide) characteristic of all chlorophylls from magnesium-protoporphyrin IX 13-monomethyl ester (MgPMME). The sequence is that of Magnesium-protoporphyrin IX monomethyl ester [oxidative] cyclase from Prochlorococcus marinus subsp. pastoris (strain CCMP1986 / NIES-2087 / MED4).